Reading from the N-terminus, the 204-residue chain is Dual specificity protein phosphatase 18 (204 aa).

The region spanning 19–160 (GLSQITKSLF…LIHYEFQLFG (142 aa)) is the Tyrosine-protein phosphatase domain. The sufficient for mitochondrial localization stretch occupies residues 95–141 (MKQGRTLLHCAAGVSRSAALCLAYLMKYHVMSLLDAHAWTKSRRPII). The Phosphocysteine intermediate role is filled by Cys104.

This sequence belongs to the protein-tyrosine phosphatase family. Non-receptor class dual specificity subfamily.

Its subcellular location is the cytoplasm. It is found in the nucleus. The protein localises to the mitochondrion inner membrane. It catalyses the reaction O-phospho-L-tyrosyl-[protein] + H2O = L-tyrosyl-[protein] + phosphate. It carries out the reaction O-phospho-L-seryl-[protein] + H2O = L-seryl-[protein] + phosphate. The catalysed reaction is O-phospho-L-threonyl-[protein] + H2O = L-threonyl-[protein] + phosphate. In terms of biological role, can dephosphorylate single and diphosphorylated synthetic MAPK peptides, with preference for the phosphotyrosine and diphosphorylated forms over phosphothreonine. In vitro, dephosphorylates p-nitrophenyl phosphate (pNPP). The protein is Dual specificity protein phosphatase 18 (Dusp18) of Rattus norvegicus (Rat).